The following is a 123-amino-acid chain: MADLKAFAEQLVNLTVKEVNELASILKDEYGIEPAAAAVVVSGGGDAAAAVEEKTAFDVILKSAGASKLAVVKLVKDLTGLGLKEAKDLVDGAPKPVKEGASKDEAEAIKKQLEEAGAEVEIK.

It belongs to the bacterial ribosomal protein bL12 family. Homodimer. Part of the ribosomal stalk of the 50S ribosomal subunit. Forms a multimeric L10(L12)X complex, where L10 forms an elongated spine to which 2 to 4 L12 dimers bind in a sequential fashion. Binds GTP-bound translation factors.

In terms of biological role, forms part of the ribosomal stalk which helps the ribosome interact with GTP-bound translation factors. Is thus essential for accurate translation. In Cytophaga hutchinsonii (strain ATCC 33406 / DSM 1761 / CIP 103989 / NBRC 15051 / NCIMB 9469 / D465), this protein is Large ribosomal subunit protein bL12.